We begin with the raw amino-acid sequence, 262 residues long: Phosphonates import ATP-binding protein PhnC (262 aa).

An ABC transporter domain is found at 5 to 253; sequence IRVEKLAKTF…RFDHLYRSIN (249 aa). ATP is bound at residue 37 to 44; that stretch reads GPSGSGKS.

Belongs to the ABC transporter superfamily. Phosphonates importer (TC 3.A.1.9.1) family. As to quaternary structure, the complex is composed of two ATP-binding proteins (PhnC), two transmembrane proteins (PhnE) and a solute-binding protein (PhnD).

The protein localises to the cell inner membrane. The catalysed reaction is phosphonate(out) + ATP + H2O = phosphonate(in) + ADP + phosphate + H(+). In terms of biological role, part of the ABC transporter complex PhnCDE involved in phosphonates import. Responsible for energy coupling to the transport system. This chain is Phosphonates import ATP-binding protein PhnC, found in Escherichia coli (strain UTI89 / UPEC).